Here is a 518-residue protein sequence, read N- to C-terminus: Putative succinate-semialdehyde dehydrogenase [NADP(+)] 2 (518 aa).

NADP(+) contacts are provided by residues 157-158 (WN), 181-184 (KPDS), and 232-233 (GS). The active-site Proton acceptor is Glu-254. Leu-255 is an NADP(+) binding site. The active-site Nucleophile is the Cys-288. Glu-386 is an NADP(+) binding site.

The protein belongs to the aldehyde dehydrogenase family.

It catalyses the reaction succinate semialdehyde + NADP(+) + H2O = succinate + NADPH + 2 H(+). Catalyzes the NADP(+)-dependent oxidation of succinate semialdehyde to succinate. Although it has succinate semialdehyde dehydrogenase activity, is likely to act physiologically on a different aldehyde(s). This Mycobacterium bovis (strain ATCC BAA-935 / AF2122/97) protein is Putative succinate-semialdehyde dehydrogenase [NADP(+)] 2 (gabD2).